The following is a 347-amino-acid chain: GMP reductase (347 aa).

108-131 (ADFAKTAQILALNPALNFVCIDVA) is a binding site for NADP(+). Positions 181 and 183 each coordinate K(+). The active-site Thioimidate intermediate is the cysteine 186. Residue 216-239 (IVSDGGCTMPGDVAKAFGGGADFV) participates in NADP(+) binding.

The protein belongs to the IMPDH/GMPR family. GuaC type 1 subfamily. In terms of assembly, homotetramer.

It catalyses the reaction IMP + NH4(+) + NADP(+) = GMP + NADPH + 2 H(+). Its function is as follows. Catalyzes the irreversible NADPH-dependent deamination of GMP to IMP. It functions in the conversion of nucleobase, nucleoside and nucleotide derivatives of G to A nucleotides, and in maintaining the intracellular balance of A and G nucleotides. The polypeptide is GMP reductase (Salmonella arizonae (strain ATCC BAA-731 / CDC346-86 / RSK2980)).